A 313-amino-acid chain; its full sequence is Dihydroorotate dehydrogenase (fumarate) (313 aa).

FMN is bound by residues Ala20 and 44 to 45 (KS). Residues Lys44, 68-72 (NSMGL), and Asn128 each bind substrate. Asn128 provides a ligand contact to FMN. Cys131 (nucleophile) is an active-site residue. Asn133 provides a ligand contact to substrate. 2 residues coordinate FMN: Lys165 and Val194. 195-196 (NS) contributes to the substrate binding site. Residues Gly223, Cys249, 249–251 (CGG), and 272–273 (GT) each bind FMN.

Belongs to the dihydroorotate dehydrogenase family. Type 1 subfamily. As to quaternary structure, homodimer. FMN is required as a cofactor.

Its subcellular location is the cytoplasm. The catalysed reaction is (S)-dihydroorotate + fumarate = orotate + succinate. It functions in the pathway pyrimidine metabolism; UMP biosynthesis via de novo pathway. Functionally, catalyzes the conversion of dihydroorotate to orotate with fumarate as the electron acceptor. Molecular oxygen can replace fumarate in vitro. The chain is Dihydroorotate dehydrogenase (fumarate) from Trypanosoma brucei brucei (strain 927/4 GUTat10.1).